We begin with the raw amino-acid sequence, 510 residues long: MRIGIPRERLTNETRVAATPKTVEQLLKLGFTVAVESGAGQLASFDDKAFVQAGAEIVEGNSVWQSEIILKVNAPLDDEIALLNPGTTLVSFIWPAQNPELMQKLAERNVTVMAMDSVPRISRAQSLDALSSMANIAGYRAIVEAAHEFGRFFTGQITAAGKVPPAKVMVIGAGVAGLAAIGAANSLGAIVRAFDTRPEVKEQVQSMGAEFLELDFKEEAGSGDGYAKVMSDAFIKAEMELFAAQAKEVDIIVTTALIPGKPAPKLITREMVDSMKAGSVIVDLAAQNGGNCEYTVPGEIFTTENGVKVIGYTDLPGRLPTQSSQLYGTNLVNLLKLLCKEKDGNITVDFDDVVIRGVTVIRAGEITWPAPPIQVSAQPQAAQKAAPEVKTEEKCTCSPWRKYALMALAIILFGWMASVAPKEFLGHFTVFALACVVGYYVVWNVSHALHTPLMSVTNAISGIIVVGALLQIGQGGWVSFLSFIAVLIASINIFGGFTVTQRMLKMFRKN.

The Cytoplasmic portion of the chain corresponds to 1–401 (MRIGIPRERL…EEKCTCSPWR (401 aa)). NAD(+)-binding positions include 120–122 (RIS), Val-175, 195–197 (DTR), Glu-238, and Leu-257. 2 consecutive transmembrane segments (helical) span residues 402-422 (KYALMALAIILFGWMASVAPK) and 423-443 (EFLGHFTVFALACVVGYYVVW). The Cytoplasmic portion of the chain corresponds to 444–452 (NVSHALHTP). Residues 453-473 (LMSVTNAISGIIVVGALLQIG) traverse the membrane as a helical segment. The Periplasmic portion of the chain corresponds to 474–476 (QGG). Residues 477 to 497 (WVSFLSFIAVLIASINIFGGF) traverse the membrane as a helical segment. Topologically, residues 498-510 (TVTQRMLKMFRKN) are cytoplasmic.

This sequence belongs to the AlaDH/PNT family. In terms of assembly, heterodimer of an alpha (PntA) and a beta (PntB) chain. Alpha subunit serves as the dimerization unit.

It localises to the cell inner membrane. It carries out the reaction NAD(+) + NADPH + H(+)(in) = NADH + NADP(+) + H(+)(out). The transhydrogenation between NADH and NADP is coupled to respiration and ATP hydrolysis and functions as a proton pump across the membrane. This chain is NAD(P) transhydrogenase subunit alpha (pntA), found in Escherichia coli (strain K12).